Reading from the N-terminus, the 681-residue chain is Oligopeptidase A (681 aa).

Histidine 470 contacts Zn(2+). The active site involves glutamate 471. Histidine 474 and histidine 477 together coordinate Zn(2+).

The protein belongs to the peptidase M3 family. It depends on Zn(2+) as a cofactor.

The catalysed reaction is Hydrolysis of oligopeptides, with broad specificity. Gly or Ala commonly occur as P1 or P1' residues, but more distant residues are also important, as is shown by the fact that Z-Gly-Pro-Gly-|-Gly-Pro-Ala is cleaved, but not Z-(Gly)(5).. Functionally, may play a specific role in the degradation of signal peptides after they are released from precursor forms of secreted proteins. Can cleave N-acetyl-L-Ala(4). The sequence is that of Oligopeptidase A (prlC) from Haemophilus influenzae (strain ATCC 51907 / DSM 11121 / KW20 / Rd).